The primary structure comprises 218 residues: Probable transaldolase (218 aa).

Lys-83 serves as the catalytic Schiff-base intermediate with substrate.

The protein belongs to the transaldolase family. Type 3B subfamily.

Its subcellular location is the cytoplasm. It catalyses the reaction D-sedoheptulose 7-phosphate + D-glyceraldehyde 3-phosphate = D-erythrose 4-phosphate + beta-D-fructose 6-phosphate. It functions in the pathway carbohydrate degradation; pentose phosphate pathway; D-glyceraldehyde 3-phosphate and beta-D-fructose 6-phosphate from D-ribose 5-phosphate and D-xylulose 5-phosphate (non-oxidative stage): step 2/3. Functionally, transaldolase is important for the balance of metabolites in the pentose-phosphate pathway. This Thermotoga petrophila (strain ATCC BAA-488 / DSM 13995 / JCM 10881 / RKU-1) protein is Probable transaldolase.